A 309-amino-acid chain; its full sequence is uncharacterized protein (309 aa).

Over residues 1–11 the composition is skewed to basic residues; sequence MPGNSRRRGAV. Residues 1 to 69 are disordered; it reads MPGNSRRRGA…PVKRTDETET (69 aa). 3 residues coordinate S-adenosyl-L-methionine: Gly261, Ile281, and Leu290.

Belongs to the class IV-like SAM-binding methyltransferase superfamily. RNA methyltransferase TrmH family.

This is an uncharacterized protein from Mycobacterium leprae (strain TN).